The following is a 314-amino-acid chain: tRNA dimethylallyltransferase (314 aa).

12 to 19 (GPTASGKT) contributes to the ATP binding site. Position 14–19 (14–19 (TASGKT)) interacts with substrate. 2 interaction with substrate tRNA regions span residues 37-40 (DSAQ) and 161-165 (QRIQR).

It belongs to the IPP transferase family. As to quaternary structure, monomer. Mg(2+) serves as cofactor.

The catalysed reaction is adenosine(37) in tRNA + dimethylallyl diphosphate = N(6)-dimethylallyladenosine(37) in tRNA + diphosphate. Functionally, catalyzes the transfer of a dimethylallyl group onto the adenine at position 37 in tRNAs that read codons beginning with uridine, leading to the formation of N6-(dimethylallyl)adenosine (i(6)A). This Nitrosococcus oceani (strain ATCC 19707 / BCRC 17464 / JCM 30415 / NCIMB 11848 / C-107) protein is tRNA dimethylallyltransferase.